We begin with the raw amino-acid sequence, 101 residues long: Protein Tat (101 aa).

The tract at residues 1–24 (MEPVDPNREPWNHPGSQPKTACTN) is interaction with human CREBBP. Positions 1 to 48 (MEPVDPNREPWNHPGSQPKTACTNCYCKKCCYHCQVCFLQKGLGISYG) are transactivation. 3 residues coordinate Zn(2+): C22, C25, and C27. The segment at 22 to 37 (CTNCYCKKCCYHCQVC) is cysteine-rich. K28 bears the N6-acetyllysine; by host PCAF mark. Residues C30, H33, C34, and C37 each contribute to the Zn(2+) site. The tract at residues 38-48 (FLQKGLGISYG) is core. Positions 48-101 (GRKKRRQRRSAPPGSKTHQDLIPKQPLSQTQRKPTGPEESKKEVESKAEPDRFD) are disordered. The Nuclear localization signal, RNA-binding (TAR), and protein transduction signature appears at 49 to 57 (RKKRRQRRS). Residues 49 to 86 (RKKRRQRRSAPPGSKTHQDLIPKQPLSQTQRKPTGPEE) form an interaction with the host capping enzyme RNGTT region. N6-acetyllysine; by host EP300 and GCN5L2 is present on residues K50 and K51. Residues R52 and R53 each carry the asymmetric dimethylarginine; by host PRMT6 modification. Residue K71 forms a Glycyl lysine isopeptide (Lys-Gly) (interchain with G-Cter in ubiquitin) linkage. Basic and acidic residues predominate over residues 82–101 (TGPEESKKEVESKAEPDRFD).

Belongs to the lentiviruses Tat family. In terms of assembly, interacts with host CCNT1. Associates with the P-TEFb complex composed at least of Tat, P-TEFb (CDK9 and CCNT1), TAR RNA, RNA Pol II. Recruits the HATs CREBBP, TAF1/TFIID, EP300, PCAF and GCN5L2. Interacts with host KAT5/Tip60; this interaction targets the latter to degradation. Interacts with the host deacetylase SIRT1. Interacts with host capping enzyme RNGTT; this interaction stimulates RNGTT. Binds to host KDR, and to the host integrins ITGAV/ITGB3 and ITGA5/ITGB1. Interacts with host KPNB1/importin beta-1 without previous binding to KPNA1/importin alpha-1. Interacts with EIF2AK2. Interacts with host nucleosome assembly protein NAP1L1; this interaction may be required for the transport of Tat within the nucleus, since the two proteins interact at the nuclear rim. Interacts with host C1QBP/SF2P32; this interaction involves lysine-acetylated Tat. Interacts with the host chemokine receptors CCR2, CCR3 and CXCR4. Interacts with host DPP4/CD26; this interaction may trigger an anti-proliferative effect. Interacts with host LDLR. Interacts with the host extracellular matrix metalloproteinase MMP1. Interacts with host PRMT6; this interaction mediates Tat's methylation. Interacts with, and is ubiquitinated by MDM2/Hdm2. Interacts with host PSMC3 and HTATIP2. Interacts with STAB1; this interaction may overcome SATB1-mediated repression of IL2 and IL2RA (interleukin) in T cells by binding to the same domain than HDAC1. Interacts (when acetylated) with human CDK13, thereby increasing HIV-1 mRNA splicing and promoting the production of the doubly spliced HIV-1 protein Nef. Interacts with host TBP; this interaction modulates the activity of transcriptional pre-initiation complex. Interacts with host RELA. Interacts with host PLSCR1; this interaction negatively regulates Tat transactivation activity by altering its subcellular distribution. In terms of processing, asymmetrical arginine methylation by host PRMT6 seems to diminish the transactivation capacity of Tat and affects the interaction with host CCNT1. Post-translationally, acetylation by EP300, CREBBP, GCN5L2/GCN5 and PCAF regulates the transactivation activity of Tat. EP300-mediated acetylation of Lys-50 promotes dissociation of Tat from the TAR RNA through the competitive binding to PCAF's bromodomain. In addition, the non-acetylated Tat's N-terminus can also interact with PCAF. PCAF-mediated acetylation of Lys-28 enhances Tat's binding to CCNT1. Lys-50 is deacetylated by SIRT1. Polyubiquitination by host MDM2 does not target Tat to degradation, but activates its transactivation function and fosters interaction with CCNT1 and TAR RNA. In terms of processing, phosphorylated by EIF2AK2 on serine and threonine residues adjacent to the basic region important for TAR RNA binding and function. Phosphorylation of Tat by EIF2AK2 is dependent on the prior activation of EIF2AK2 by dsRNA.

Its subcellular location is the host nucleus. The protein localises to the host nucleolus. The protein resides in the host cytoplasm. It is found in the secreted. Its function is as follows. Transcriptional activator that increases RNA Pol II processivity, thereby increasing the level of full-length viral transcripts. Recognizes a hairpin structure at the 5'-LTR of the nascent viral mRNAs referred to as the transactivation responsive RNA element (TAR) and recruits the cyclin T1-CDK9 complex (P-TEFb complex) that will in turn hyperphosphorylate the RNA polymerase II to allow efficient elongation. The CDK9 component of P-TEFb and other Tat-activated kinases hyperphosphorylate the C-terminus of RNA Pol II that becomes stabilized and much more processive. Other factors such as HTATSF1/Tat-SF1, SUPT5H/SPT5, and HTATIP2 are also important for Tat's function. Besides its effect on RNA Pol II processivity, Tat induces chromatin remodeling of proviral genes by recruiting the histone acetyltransferases (HATs) CREBBP, EP300 and PCAF to the chromatin. This also contributes to the increase in proviral transcription rate, especially when the provirus integrates in transcriptionally silent region of the host genome. To ensure maximal activation of the LTR, Tat mediates nuclear translocation of NF-kappa-B by interacting with host RELA. Through its interaction with host TBP, Tat may also modulate transcription initiation. Tat can reactivate a latently infected cell by penetrating in it and transactivating its LTR promoter. In the cytoplasm, Tat is thought to act as a translational activator of HIV-1 mRNAs. Extracellular circulating Tat can be endocytosed by surrounding uninfected cells via the binding to several surface receptors such as CD26, CXCR4, heparan sulfate proteoglycans (HSPG) or LDLR. Neurons are rarely infected, but they internalize Tat via their LDLR. Through its interaction with nuclear HATs, Tat is potentially able to control the acetylation-dependent cellular gene expression. Modulates the expression of many cellular genes involved in cell survival, proliferation or in coding for cytokines or cytokine receptors. Tat plays a role in T-cell and neurons apoptosis. Tat induced neurotoxicity and apoptosis probably contribute to neuroAIDS. Circulating Tat also acts as a chemokine-like and/or growth factor-like molecule that binds to specific receptors on the surface of the cells, affecting many cellular pathways. In the vascular system, Tat binds to ITGAV/ITGB3 and ITGA5/ITGB1 integrins dimers at the surface of endothelial cells and competes with bFGF for heparin-binding sites, leading to an excess of soluble bFGF. This Homo sapiens (Human) protein is Protein Tat.